Here is a 307-residue protein sequence, read N- to C-terminus: Reaction center protein M chain (307 aa).

3 helical membrane passes run 52–78, 110–139, and 142–167; these read LGIAGTVSLAFGAAWFFTIGVWYWYQA, QGGVWQIASLFMAISVIAWWVRVYTRADQL, and GKHMAWAFLSAIWLWSVLGFWRPILM. (7R,8Z)-bacteriochlorophyll b is bound by residues His181 and His201. The helical transmembrane segment at 197–225 threads the bilayer; it reads YNPFHGLSIAALYGSALLFAMHGATILAV. His218 and Glu233 together coordinate Fe cation. Trp251 lines the a ubiquinone pocket. The chain crosses the membrane as a helical span at residues 259–285; that stretch reads ATMEGIHRWAIWMAVMVTLTGGIGILL. Residue His265 coordinates Fe cation.

The protein belongs to the reaction center PufL/M/PsbA/D family. Reaction center is composed of four bacteriochlorophylls, two bacteriopheophytins, two ubiquinones, one iron, and three highly hydrophobic polypeptide chains (designated L, M, and H).

Its subcellular location is the cellular chromatophore membrane. In terms of biological role, the reaction center is a membrane-bound complex that mediates the initial photochemical event in the electron transfer process of photosynthesis. This Rhodobacter capsulatus (Rhodopseudomonas capsulata) protein is Reaction center protein M chain (pufM).